Reading from the N-terminus, the 478-residue chain is Dynein regulatory complex subunit 4 (478 aa).

Over residues 1-12 (MAPKKKGKKGKA) the composition is skewed to basic residues. Positions 1–29 (MAPKKKGKKGKAKGTAIVDGVAPEDMTKE) are disordered. The segment at 1 to 114 (MAPKKKGKKG…LLYEHQNNLA (114 aa)) is regulates microtubule-binding. Coiled coils occupy residues 24–207 (EDMT…RKTE) and 242–426 (LNNL…ELAR). Residues 115–258 (EVKAEGTVVM…NSLKEQMEDM (144 aa)) are microtubule-binding. The tract at residues 357–478 (QQKTGFKNLL…GPAGLVGAPT (122 aa)) is interaction with SMO.

The protein belongs to the DRC4 family. Component of the nexin-dynein regulatory complex (N-DRC). Interacts with microtubules. Interacts with SMO. Interacts (via coiled-coil domains) with RAB3B (in GTP-bound form). Interacts with DRC1. Interacts with DRC7. In terms of tissue distribution, highly expressed in adult testes and lung. Weakly or not expressed in other tested tissues.

It is found in the cytoplasm. The protein localises to the cytoskeleton. It localises to the cell projection. Its subcellular location is the cilium. The protein resides in the flagellum. It is found in the cilium axoneme. The protein localises to the cilium basal body. It localises to the golgi apparatus. Its subcellular location is the flagellum axoneme. Functionally, component of the nexin-dynein regulatory complex (N-DRC), a key regulator of ciliary/flagellar motility which maintains the alignment and integrity of the distal axoneme and regulates microtubule sliding in motile axonemes. Plays an important role in the assembly of the N-DRC linker. Plays dual roles at both the primary (or non-motile) cilia to regulate hedgehog signaling and in motile cilia to coordinate cilia movement. Required for proper motile cilia functioning. Positively regulates ciliary smoothened (SMO)-dependent Hedgehog (Hh) signaling pathway by facilitating the trafficking of SMO into the cilium and the stimulation of SMO activity in a GRK2-dependent manner. May play a role in the spermatozoa motility. The protein is Dynein regulatory complex subunit 4 (Gas8) of Mus musculus (Mouse).